Here is a 381-residue protein sequence, read N- to C-terminus: Trans-enoyl reductase iliB (381 aa).

50 to 53 serves as a coordination point for NADP(+); the sequence is VDGK. 145 to 152 contributes to the substrate binding site; sequence ATLATVGL. Residues 213-216, Y231, and 278-279 each bind NADP(+); these read SPGS and LD. 298–302 serves as a coordination point for substrate; the sequence is TYTQF. 367–368 provides a ligand contact to NADP(+); it reads IS.

It belongs to the zinc-containing alcohol dehydrogenase family. As to quaternary structure, monomer.

The catalysed reaction is N-[(4E,6E,10S,12Z,14E)-6,10-dimethyl-3-oxohexadeca-4,6,12,14-tetraenoyl]-L-tyrosyl-[ACP] = (3E,5S)-3-[(2E,4E,8S,10E,12Z)-1-hydroxy-4,8-dimethyltetradeca-2,4,10,12-tetraen-1-ylidene]-5-[(4-hydroxyphenyl)methyl]pyrrolidine-2,4-dione + holo-[ACP] + H(+). It functions in the pathway mycotoxin biosynthesis. Functionally, trans-enoyl reductase; part of the gene cluster that mediates the biosynthesis of ilicicolin H, a 4-hydroxy-2-pyridonealkaloid that has potent and broad antifungal activities by inhibiting the mitochondrial respiration chain. IliB collaborates with the hybrid PKS-NRPS synthetase iliA to assemble the backbone of ilicicolin H. The PKS portion of iliA and trans-acting enoyl reductase iliB work together to construct an octaketide, and two methyl groups are introduced by the MT domain of iliA during the chain assembly. The nascent chain is then condensed with tyrosine, catalyzed by the iliA C domain, and the resulting PKS-NRPS hybrid is offloaded by the iliA RED domain to form an advanced tetramic acid intermediate. The biosynthesis of ilicicolin H starts with formation of the tetramic acid by the hybrid PKS-NRPS synthetase iliA with the partnering trans-enoyl reductase iliB since iliA lacks a designated enoylreductase (ER) domain. The cytochrome P450 monooxygenase iliC then catalyzes the ring expansion of the tetramate to the acyclic 2-pyridone. The pericyclase iliD further converts the acyclic 2-pyridone into 8-epi-ilicicolin H. 8-epi-ilicicolin H might then spontaneously convert to ilicicolin H since ilicicolin H is produced in the absence of the epimerase iliE, in contrast to what was observed for the Talaromyces variabilis ilicolin H biosynthetic pathway. This chain is Trans-enoyl reductase iliB, found in Neonectria sp. (strain DH2).